A 281-amino-acid polypeptide reads, in one-letter code: MQQPRGRSRNRSHQVALSTYHENQLPSKPQYINHHPRARSMSSTRSSTEGSPTNHASRARPLSTFNLSKPPPPPKDMCRNMKIGLPCTDPACNRDHDLDNLTNRELLLLMARKMLPNTDKAFKSQQDCGSPSLSKGLSKDKQEQAKDVLTLENLGHILNYLHRSEIGKLDETSLRAALSLTCAGIRKTNRSLINTMTELHINHENLPQDQNGVIKQTYTGIHLDKGGQFEAALWQGWDKKSISLFVQAALYVMNNIPCESSISVQASYDHFILPRNQGERQ.

Over residues 1–12 (MQQPRGRSRNRS) the composition is skewed to basic residues. The disordered stretch occupies residues 1 to 74 (MQQPRGRSRN…FNLSKPPPPP (74 aa)). Over residues 13 to 27 (HQVALSTYHENQLPS) the composition is skewed to polar residues. The span at 39-53 (RSMSSTRSSTEGSPT) shows a compositional bias: low complexity. The segment at 78–96 (CRNMKIGLPCTDPACNRDH) adopts a C3H1-type; atypical zinc-finger fold. A disordered region spans residues 120–141 (KAFKSQQDCGSPSLSKGLSKDK). Positions 123–135 (KSQQDCGSPSLSK) are enriched in polar residues.

The protein belongs to the filoviridae transcriptional activator VP30 family. In terms of assembly, homooligomer. Phosphorylated by host. Phosphorylation negatively regulates the transcription activation.

It localises to the virion. Its subcellular location is the host cytoplasm. Its function is as follows. Acts as a transcription anti-termination factor immediately after transcription initiation, but does not affect transcription elongation. This function has been found to be dependent on the formation of an RNA secondary structure at the transcription start site of the first gene. This is Transcriptional activator VP30 (VP30) from Lake Victoria marburgvirus (strain Ravn-87) (MARV).